Here is a 42-residue protein sequence, read N- to C-terminus: Potassium channel toxin gamma-KTx 1.3 (42 aa).

4 cysteine pairs are disulfide-bonded: cysteine 5/cysteine 23, cysteine 11/cysteine 34, cysteine 20/cysteine 39, and cysteine 24/cysteine 41.

Belongs to the ergtoxin family. Gamma-KTx 1 subfamily. In terms of tissue distribution, expressed by the venom gland.

Its subcellular location is the secreted. Functionally, blocks Kv11/ERG potassium channels. This is Potassium channel toxin gamma-KTx 1.3 from Centruroides gracilis (Slenderbrown scorpion).